The following is a 525-amino-acid chain: GMP synthase [glutamine-hydrolyzing] (525 aa).

The region spanning 9–207 is the Glutamine amidotransferase type-1 domain; it reads RILILDFGSQ…VLQICQCEPL (199 aa). The active-site Nucleophile is C86. Residues H181 and E183 contribute to the active site. A GMPS ATP-PPase domain is found at 208–400; it reads WTPRNIIDQT…LGLPNAMLHR (193 aa). 235 to 241 contacts ATP; it reads SGGVDSA.

Homodimer.

It catalyses the reaction XMP + L-glutamine + ATP + H2O = GMP + L-glutamate + AMP + diphosphate + 2 H(+). It participates in purine metabolism; GMP biosynthesis; GMP from XMP (L-Gln route): step 1/1. Catalyzes the synthesis of GMP from XMP. This is GMP synthase [glutamine-hydrolyzing] from Hamiltonella defensa subsp. Acyrthosiphon pisum (strain 5AT).